Reading from the N-terminus, the 37-residue chain is Large ribosomal subunit protein bL36c (37 aa).

It belongs to the bacterial ribosomal protein bL36 family.

Its subcellular location is the plastid. It is found in the chloroplast. This is Large ribosomal subunit protein bL36c (rpl36) from Marchantia polymorpha (Common liverwort).